An 806-amino-acid polypeptide reads, in one-letter code: Phenylalanine--tRNA ligase beta subunit (806 aa).

One can recognise a tRNA-binding domain in the interval 39-154 (SAGLKKIVVG…EAIAPGTDVY (116 aa)). The region spanning 410–485 (PQPKVIQFDS…RLYGYDNLPS (76 aa)) is the B5 domain. 4 residues coordinate Mg(2+): Asp-463, Asp-469, Glu-472, and Glu-473. The 94-residue stretch at 713–806 (PKFPEVTRDI…LVATFQAKVR (94 aa)) folds into the FDX-ACB domain.

This sequence belongs to the phenylalanyl-tRNA synthetase beta subunit family. Type 1 subfamily. In terms of assembly, tetramer of two alpha and two beta subunits. Requires Mg(2+) as cofactor.

It is found in the cytoplasm. It carries out the reaction tRNA(Phe) + L-phenylalanine + ATP = L-phenylalanyl-tRNA(Phe) + AMP + diphosphate + H(+). This is Phenylalanine--tRNA ligase beta subunit from Latilactobacillus sakei subsp. sakei (strain 23K) (Lactobacillus sakei subsp. sakei).